Here is a 504-residue protein sequence, read N- to C-terminus: Pyruvate kinase (504 aa).

Arg53 is a substrate binding site. 4 residues coordinate K(+): Asn55, Ser57, Asp88, and Thr89. 55–58 (NFSH) provides a ligand contact to ATP. The ATP site is built by Arg95 and Lys181. Glu246 serves as a coordination point for Mg(2+). Gly269, Asp270, and Thr302 together coordinate substrate. Position 270 (Asp270) interacts with Mg(2+).

The protein belongs to the pyruvate kinase family. As to quaternary structure, homotetramer. It depends on Mg(2+) as a cofactor. K(+) serves as cofactor.

It is found in the cytoplasm. The catalysed reaction is pyruvate + ATP = phosphoenolpyruvate + ADP + H(+). It participates in carbohydrate degradation; glycolysis; pyruvate from D-glyceraldehyde 3-phosphate: step 5/5. The sequence is that of Pyruvate kinase (CDC19) from Candida albicans (strain SC5314 / ATCC MYA-2876) (Yeast).